The following is a 457-amino-acid chain: Siroheme synthase (457 aa).

The segment at 1–204 is precorrin-2 dehydrogenase /sirohydrochlorin ferrochelatase; that stretch reads MDHLPIFCQL…NDQKAITETT (204 aa). Residues 22 to 23 and 43 to 44 each bind NAD(+); these read DV and LA. S128 carries the phosphoserine modification. The uroporphyrinogen-III C-methyltransferase stretch occupies residues 216-457; that stretch reads GEVVLVGAGP…RDKLNWFSNH (242 aa). An S-adenosyl-L-methionine-binding site is contributed by P225. Catalysis depends on D248, which acts as the Proton acceptor. Catalysis depends on K270, which acts as the Proton donor. S-adenosyl-L-methionine-binding positions include 301-303, I306, 331-332, M382, and G411; these read GGD and TA.

In the N-terminal section; belongs to the precorrin-2 dehydrogenase / sirohydrochlorin ferrochelatase family. The protein in the C-terminal section; belongs to the precorrin methyltransferase family.

It carries out the reaction uroporphyrinogen III + 2 S-adenosyl-L-methionine = precorrin-2 + 2 S-adenosyl-L-homocysteine + H(+). The catalysed reaction is precorrin-2 + NAD(+) = sirohydrochlorin + NADH + 2 H(+). It catalyses the reaction siroheme + 2 H(+) = sirohydrochlorin + Fe(2+). It functions in the pathway cofactor biosynthesis; adenosylcobalamin biosynthesis; precorrin-2 from uroporphyrinogen III: step 1/1. Its pathway is cofactor biosynthesis; adenosylcobalamin biosynthesis; sirohydrochlorin from precorrin-2: step 1/1. It participates in porphyrin-containing compound metabolism; siroheme biosynthesis; precorrin-2 from uroporphyrinogen III: step 1/1. The protein operates within porphyrin-containing compound metabolism; siroheme biosynthesis; siroheme from sirohydrochlorin: step 1/1. It functions in the pathway porphyrin-containing compound metabolism; siroheme biosynthesis; sirohydrochlorin from precorrin-2: step 1/1. Functionally, multifunctional enzyme that catalyzes the SAM-dependent methylations of uroporphyrinogen III at position C-2 and C-7 to form precorrin-2 via precorrin-1. Then it catalyzes the NAD-dependent ring dehydrogenation of precorrin-2 to yield sirohydrochlorin. Finally, it catalyzes the ferrochelation of sirohydrochlorin to yield siroheme. This is Siroheme synthase from Shigella dysenteriae serotype 1 (strain Sd197).